Consider the following 457-residue polypeptide: Fibrinogen C domain-containing protein 1-A (457 aa).

Positions 1 to 20 (MGSDRWKNIGGTPQMEDSAQ) are disordered. At 1 to 33 (MGSDRWKNIGGTPQMEDSAQEKTQRKGCGYILC) the chain is on the cytoplasmic side. Residues 34–54 (TVLLSVAVLLAVTVTGAVLFM) form a helical; Signal-anchor for type II membrane protein membrane-spanning segment. Residues 55 to 457 (NHYHAPSTEP…MKIRPQREEN (403 aa)) lie on the Extracellular side of the membrane. Positions 216 to 235 (ADLQRAPSRNSRPRGCANGS) are disordered. In terms of domain architecture, Fibrinogen C-terminal spans 231-454 (CANGSKPRDC…FTEMKIRPQR (224 aa)). N-linked (GlcNAc...) asparagine glycosylation occurs at Asn-233. Cysteines 240 and 269 form a disulfide. Asn-336 is a glycosylation site (N-linked (GlcNAc...) asparagine). Ca(2+) is bound by residues Asp-389 and Asp-391. Cysteines 397 and 410 form a disulfide.

In terms of assembly, homotetramer; disulfide-linked.

It localises to the membrane. In terms of biological role, acetyl group-binding receptor which shows a calcium-dependent binding to acetylated structures such as chitin, some N-acetylated carbohydrates, and amino acids. The chain is Fibrinogen C domain-containing protein 1-A (fibcd1-a) from Xenopus laevis (African clawed frog).